Here is an 85-residue protein sequence, read N- to C-terminus: U4-theraphotoxin-Hhn1a (85 aa).

An N-terminal signal peptide occupies residues 1–22 (MKVTLIVILTCAAVLVLHTTAA). Residues 23-48 (EELEAESQLMEVGMPDTELAAVDEER) constitute a propeptide that is removed on maturation. Cystine bridges form between Cys52/Cys66, Cys56/Cys77, and Cys71/Cys82.

This sequence belongs to the neurotoxin 12 (Hwtx-2) family. 02 (Hwtx-2) subfamily. As to quaternary structure, monomer. In terms of tissue distribution, expressed by the venom gland.

Its subcellular location is the secreted. In terms of biological role, neurotoxin active on both insects and mammals. The sequence is that of U4-theraphotoxin-Hhn1a from Cyriopagopus hainanus (Chinese bird spider).